A 422-amino-acid chain; its full sequence is MNSGHSFSQTPSASFHGAGGGWGRPRSFPRAPTVHGGAGGARISLSFTTRSCPPPGGSWGSGRSSPLLGGNGKATMQNLNDRLASYLEKVRALEEANMKLESRILKWHQQRDPGSKKDYSQYEENITHLQEQIVDGKMTNAQIILLIDNARMAVDDFNLKYENEHSFKKDLEIEVEGLRRTLDNLTIVTTDLEQEVEGMRKELILMKKHHEQEMEKHHVPSDFNVNVKVDTGPREDLIKVLEDMRQEYELIIKKKHRDLDTWYKEQSAAMSQEAASPATVQSRQGDIHELKRTFQALEIDLQTQYSTKSALENMLSETQSRYSCKLQDMQEIISHYEEELTQLRHELERQNNEYQVLLGIKTHLEKEITTYRRLLEGESEGTREESKSSMKVSATPKIKAITQETINGRLVLCQVNEIQKHA.

Over residues 1 to 13 the composition is skewed to polar residues; it reads MNSGHSFSQTPSA. The tract at residues 1 to 71 is head; that stretch reads MNSGHSFSQT…GRSSPLLGGN (71 aa). Residues 1-73 are disordered; that stretch reads MNSGHSFSQT…SSPLLGGNGK (73 aa). The tract at residues 72–107 is coil 1A; the sequence is GKATMQNLNDRLASYLEKVRALEEANMKLESRILKW. In terms of domain architecture, IF rod spans 72–382; that stretch reads GKATMQNLND…RLLEGESEGT (311 aa). Residues 108–125 form a linker 1 region; the sequence is HQQRDPGSKKDYSQYEEN. The tract at residues 126 to 217 is coil 1B; the sequence is ITHLQEQIVD…KHHEQEMEKH (92 aa). The segment at 218–240 is linker 12; sequence HVPSDFNVNVKVDTGPREDLIKV. The interval 241–378 is coil 2; sequence LEDMRQEYEL…TTYRRLLEGE (138 aa). The tract at residues 379 to 422 is rod-like helical tail; that stretch reads SEGTREESKSSMKVSATPKIKAITQETINGRLVLCQVNEIQKHA.

The protein belongs to the intermediate filament family. Heterotetramer of two type I and two type II keratins.

The protein is Keratin, type I cytoskeletal 23 (KRT23) of Homo sapiens (Human).